A 1374-amino-acid chain; its full sequence is DNA-directed RNA polymerase subunit beta (1374 aa).

This sequence belongs to the RNA polymerase beta chain family. As to quaternary structure, the RNAP catalytic core consists of 2 alpha, 1 beta, 1 beta' and 1 omega subunit. When a sigma factor is associated with the core the holoenzyme is formed, which can initiate transcription.

The enzyme catalyses RNA(n) + a ribonucleoside 5'-triphosphate = RNA(n+1) + diphosphate. Its function is as follows. DNA-dependent RNA polymerase catalyzes the transcription of DNA into RNA using the four ribonucleoside triphosphates as substrates. This Acidovorax ebreus (strain TPSY) (Diaphorobacter sp. (strain TPSY)) protein is DNA-directed RNA polymerase subunit beta.